The following is a 442-amino-acid chain: Probable xylan O-acetyltransferase 8 (442 aa).

Topologically, residues 1–13 (MVQLPAMKRVKGR) are cytoplasmic. A helical; Signal-anchor for type II membrane protein membrane pass occupies residues 14–34 (APLSVVVAIIGGLALAGIIFT). Over 35 to 442 (EDLRGLTEVK…TWNRLLYAHL (408 aa)) the chain is Lumenal. N-linked (GlcNAc...) asparagine glycosylation is present at asparagine 96. Cystine bridges form between cysteine 100–cysteine 151, cysteine 122–cysteine 187, cysteine 131–cysteine 426, and cysteine 344–cysteine 422. The short motif at 174-176 (GDS) is the GDS motif element. Serine 176 (nucleophile) is an active-site residue. Residues asparagine 217, asparagine 346, and asparagine 384 are each glycosylated (N-linked (GlcNAc...) asparagine). Catalysis depends on aspartate 421, which acts as the Proton donor. The short motif at 421-424 (DCIH) is the DXXH motif element. Histidine 424 acts as the Proton acceptor in catalysis.

It belongs to the PC-esterase family. TBL subfamily.

It is found in the golgi apparatus membrane. Its function is as follows. Probable xylan acetyltransferase required for 2-O- and 3-O-monoacetylation of xylosyl residues in xylan. Possesses extremely low activity in vitro. This is Probable xylan O-acetyltransferase 8 from Oryza sativa subsp. japonica (Rice).